Consider the following 368-residue polypeptide: Metacaspase-6 (368 aa).

Residues histidine 86 and cysteine 139 contribute to the active site. An S-nitrosocysteine modification is found at cysteine 139. The tract at residues 153–174 is disordered; the sequence is GESTKKKKDSGDSSTINKETEA.

This sequence belongs to the peptidase C14B family. Proteolytically processed; by an autocatalytic mechanism. In terms of tissue distribution, expressed in roots and flower buds.

The chain is Metacaspase-6 (AMC6) from Arabidopsis thaliana (Mouse-ear cress).